A 610-amino-acid chain; its full sequence is T-cell immunomodulatory protein (610 aa).

The N-terminal stretch at 1–32 (MAAGLLPSARAVLALLFLGLALLSVGPAPAQA) is a signal peptide. Residues N35, N94, N123, N138, N145, N150, N175, and N241 are each glycosylated (N-linked (GlcNAc...) asparagine). An FG-GAP 1; atypical repeat occupies 98-135 (LVTSVVPGDYDGDSQMDVLLTYFPQNHSNNELGAVIFW). An FG-GAP 2; atypical repeat occupies 153–183 (FHDQPLIMDFNGDLIPDVFAITNESSQPQIL). Residues 256-291 (VVGQSAFADFDGDGHMDHLLPGCEDKDCQKSAIYLM) form an FG-GAP 3; atypical repeat. N-linked (GlcNAc...) asparagine glycosylation is found at N351, N369, and N480. The helical transmembrane segment at 564 to 584 (IVLLTAVALTGVCVFILAIIA) threads the bilayer.

It belongs to the TIP family. As to quaternary structure, interacts with RUVBL1, RUVBL2 and alpha-tubulin.

It is found in the secreted. The protein localises to the cell membrane. Modulator of T-cell function. Has a protective effect in graft versus host disease model. The polypeptide is T-cell immunomodulatory protein (Rattus norvegicus (Rat)).